Consider the following 202-residue polypeptide: Small ribosomal subunit protein uS4 (202 aa).

Positions 15-42 (LGDLPGLTRKAAKRSYPPGQHGQARRKR) are disordered. The region spanning 90–152 (NRLDNVCFRI…KCSKLLAEAN (63 aa)) is the S4 RNA-binding domain.

Belongs to the universal ribosomal protein uS4 family. Part of the 30S ribosomal subunit. Contacts protein S5. The interaction surface between S4 and S5 is involved in control of translational fidelity.

Its function is as follows. One of the primary rRNA binding proteins, it binds directly to 16S rRNA where it nucleates assembly of the body of the 30S subunit. With S5 and S12 plays an important role in translational accuracy. The chain is Small ribosomal subunit protein uS4 from Synechococcus sp. (strain CC9311).